Reading from the N-terminus, the 466-residue chain is Vimentin (466 aa).

Composition is skewed to low complexity over residues 1–13 (MSTRSVSSSSYRR) and 20–33 (TSSRPSSNRSYVTT). The interval 1-33 (MSTRSVSSSSYRRMFGGSGTSSRPSSNRSYVTT) is disordered. N-acetylserine is present on Ser-2. The head stretch occupies residues 2 to 95 (STRSVSSSSY…FSLADAINTE (94 aa)). Ser-5 is modified (phosphoserine). Ser-7 is modified (phosphoserine; by PKA and PKC; alternate). Residue Ser-7 is glycosylated (O-linked (GlcNAc) serine; alternate). Ser-8 carries the post-translational modification Phosphoserine. Phosphoserine; by PKC is present on residues Ser-9 and Ser-10. At Thr-20 the chain carries Phosphothreonine. Ser-21 carries the phosphoserine; by PKC modification. At Ser-25 the chain carries Phosphoserine; by PKA and PKC. Residue Ser-26 is modified to Phosphoserine; by PKC. O-linked (GlcNAc) threonine glycosylation occurs at Thr-33. O-linked (GlcNAc) serine; alternate glycosylation is present at Ser-34. Ser-34 bears the Phosphoserine; by PKC; alternate mark. Position 39 is a phosphoserine; by CaMK2, PKA, PKC and ROCK2 (Ser-39). At Ser-42 the chain carries Phosphoserine; by PKC. Ser-47 is modified (phosphoserine; by PKA). Ser-49 carries the post-translational modification Phosphoserine. Residue Ser-51 is modified to Phosphoserine; by PKA and PKC. Residue Tyr-53 is modified to Phosphotyrosine. Residues Ser-55 and Ser-56 each carry the phosphoserine modification. A Phosphotyrosine modification is found at Tyr-61. Ser-66 carries the phosphoserine; by PKA and PKC modification. Ser-72 bears the Phosphoserine; by AURKB and ROCK2 mark. Phosphoserine is present on Ser-73. Ser-83 carries the post-translational modification Phosphoserine; by CaMK2. Position 87 is a phosphoserine (Ser-87). The coil 1A stretch occupies residues 96 to 131 (FKNTRTNEKVELQELNDRFANYIDKVRFLEQQNKIL). Residues 96–131 (FKNTRTNEKVELQELNDRFANYIDKVRFLEQQNKIL) adopt a coiled-coil conformation. Residues 103–411 (EKVELQELND…KLLEGEESRI (309 aa)) form the IF rod domain. Lys-104 participates in a covalent cross-link: Glycyl lysine isopeptide (Lys-Gly) (interchain with G-Cter in SUMO2). The residue at position 117 (Tyr-117) is a Phosphotyrosine. Lys-120, Lys-129, and Lys-139 each carry N6-acetyllysine; alternate. Lys-120 and Lys-129 each carry N6-succinyllysine; alternate. Residues Lys-120, Lys-129, and Lys-139 each participate in a glycyl lysine isopeptide (Lys-Gly) (interchain with G-Cter in SUMO2); alternate cross-link. The interval 132–153 (LAELEQLKGQGKSRLGDLYEEE) is linker 1. Ser-144 is subject to Phosphoserine. A coiled-coil region spans residues 154 to 245 (MRELRRQVDQ…KLHDEEIQEL (92 aa)). The tract at residues 154 to 245 (MRELRRQVDQ…KLHDEEIQEL (92 aa)) is coil 1B. Lys-168 carries the post-translational modification N6-acetyllysine. Lys-188 carries the post-translational modification N6-acetyllysine; alternate. Lys-188 is subject to N6-succinyllysine; alternate. Phosphoserine is present on Ser-214. N6-acetyllysine; alternate is present on Lys-223. Residue Lys-223 forms a Glycyl lysine isopeptide (Lys-Gly) (interchain with G-Cter in SUMO2); alternate linkage. Ser-226 is subject to Phosphoserine. N6-acetyllysine is present on Lys-235. The linker 12 stretch occupies residues 246-268 (QAQIQEQHVQIDVDVSKPDLTAA). A Glycyl lysine isopeptide (Lys-Gly) (interchain with G-Cter in SUMO2) cross-link involves residue Lys-262. Positions 269–407 (LRDVRQQYES…ATYRKLLEGE (139 aa)) are coil 2. Lys-294 carries the post-translational modification N6-acetyllysine; alternate. At Lys-294 the chain carries N6-succinyllysine; alternate. A Glycyl lysine isopeptide (Lys-Gly) (interchain with G-Cter in SUMO2); alternate cross-link involves residue Lys-294. Ser-299 is subject to Phosphoserine. Positions 303 to 407 (NRNNDALRQA…ATYRKLLEGE (105 aa)) form a coiled coil. Residue Lys-313 forms a Glycyl lysine isopeptide (Lys-Gly) (interchain with G-Cter in SUMO2) linkage. Residue Ser-325 is modified to Phosphoserine. Positions 326-329 (LTCE) match the [IL]-x-C-x-x-[DE] motif motif. An N6-acetyllysine; alternate modification is found at Lys-373. A Glycyl lysine isopeptide (Lys-Gly) (interchain with G-Cter in SUMO2); alternate cross-link involves residue Lys-373. The tract at residues 408–466 (ESRISLPLPTFSSLNLRETNLESLPLVDTHSKRTLLIKTVETRDGQVINETSQHHDDLE) is tail. 4 positions are modified to phosphoserine: Ser-409, Ser-412, Ser-419, and Ser-420. Thr-426 carries the phosphothreonine modification. The residue at position 430 (Ser-430) is a Phosphoserine. A Phosphothreonine modification is found at Thr-436. Ser-438 bears the Phosphoserine mark. Lys-439 participates in a covalent cross-link: Glycyl lysine isopeptide (Lys-Gly) (interchain with G-Cter in SUMO2). Lys-445 carries the post-translational modification N6-acetyllysine; alternate. The residue at position 445 (Lys-445) is an N6-succinyllysine; alternate. A Glycyl lysine isopeptide (Lys-Gly) (interchain with G-Cter in SUMO2); alternate cross-link involves residue Lys-445. Lys-445 is covalently cross-linked (Glycyl lysine isopeptide (Lys-Gly) (interchain with G-Cter in SUMO1); alternate). Phosphothreonine is present on residues Thr-446 and Thr-458. Residue Ser-459 is modified to Phosphoserine.

Belongs to the intermediate filament family. In terms of assembly, homomer assembled from elementary dimers. Identified in complexes that contain VIM, EZR, AHNAK, BFSP1, BFSP2, ANK2, PLEC, PRX and spectrin. Interacts with BCAS3. Interacts with LGSN. Interacts with SYNM. Interacts (via rod region) with PLEC (via CH 1 domain). Interacts with PLEC isoform 1C. Interacts with STK33. Interacts with LARP6. Interacts with RAB8B. Interacts with TOR1A; the interaction associates TOR1A with the cytoskeleton. Interacts with TOR1AIP1. Interacts with DIAPH1. Interacts with EPPK1; interaction is dependent of higher-order structure of intermediate filament. Interacts with the non-receptor tyrosine kinase SRMS; the interaction leads to phosphorylation of VIM. Interacts with NOD2. Interacts (via head region) with CORO1C. Interacts with HDGF. Interacts with PRKCE (via phorbol-ester/DAG-type 2 domain). Interacts with BFSP2. Interacts with PPL. Interacts with PKP1 and PKP2. Interacts with SCRIB (via PDZ domains); the interaction protects SCRIB from proteasomal degradation and facilitates SCRIB localization to intermediate filaments, the interaction is reduced by cell contact inhibition. In terms of processing, phosphorylation by PKN1 inhibits the formation of filaments. Filament disassembly during mitosis is promoted by phosphorylation at Ser-55 as well as by nestin. One of the most prominent phosphoproteins in various cells of mesenchymal origin. Phosphorylation is enhanced during cell division, at which time vimentin filaments are significantly reorganized. Phosphorylated at Ser-56 by CDK5 during neutrophil secretion in the cytoplasm. Phosphorylated by STK33. Phosphorylated on tyrosine residues by SRMS. Post-translationally, S-nitrosylation is induced by interferon-gamma and oxidatively-modified low-densitity lipoprotein (LDL(ox)) possibly implicating the iNOS-S100A8/9 transnitrosylase complex. In terms of tissue distribution, detected in eye lens fiber cells (at protein level). Expressed in retinal lens epithelial cells (at protein level). Expressed in Langerhans cells in the epidermis (at protein level).

Its subcellular location is the cytoplasm. The protein resides in the cytoskeleton. It localises to the nucleus matrix. It is found in the cell membrane. Its function is as follows. Vimentins are class-III intermediate filaments found in various non-epithelial cells, especially mesenchymal cells. Vimentin is attached to the nucleus, endoplasmic reticulum, and mitochondria, either laterally or terminally. Plays a role in cell directional movement, orientation, cell sheet organization and Golgi complex polarization at the cell migration front. Protects SCRIB from proteasomal degradation and facilitates its localization to intermediate filaments in a cell contact-mediated manner. In terms of biological role, involved with LARP6 in the stabilization of type I collagen mRNAs for CO1A1 and CO1A2. In Mus musculus (Mouse), this protein is Vimentin.